The chain runs to 298 residues: Glycine--tRNA ligase alpha subunit (298 aa).

This sequence belongs to the class-II aminoacyl-tRNA synthetase family. Tetramer of two alpha and two beta subunits.

Its subcellular location is the cytoplasm. It catalyses the reaction tRNA(Gly) + glycine + ATP = glycyl-tRNA(Gly) + AMP + diphosphate. In Gloeothece citriformis (strain PCC 7424) (Cyanothece sp. (strain PCC 7424)), this protein is Glycine--tRNA ligase alpha subunit.